Consider the following 384-residue polypeptide: Polar flagellin C (384 aa).

Positions 317–347 (AKQNRLSHSINNLANIQENVDASNSRIKDTD) form a coiled coil.

The protein belongs to the bacterial flagellin family. As to quaternary structure, heteromer of multiple flagellin subunits including FlaA, FlaB/D, FlaC, FlaE and FlaF. Homomer of FlaC is not able to form a functional filament.

It localises to the secreted. It is found in the bacterial flagellum. Functionally, flagellin is the subunit protein which polymerizes to form the filaments of bacterial flagella. FlaC is not essential for polar flagellar synthesis and swimming motility. Homomer of FlaC is not able to form a functional filament. This chain is Polar flagellin C (flaC), found in Vibrio parahaemolyticus serotype O3:K6 (strain RIMD 2210633).